The primary structure comprises 328 residues: uncharacterized protein (328 aa).

The signal sequence occupies residues 1–24; it reads MKSIKGLGKLLLASSILFSSSAFA.

This sequence belongs to the bacterial solute-binding protein 7 family.

The protein localises to the periplasm. This is an uncharacterized protein from Haemophilus influenzae (strain ATCC 51907 / DSM 11121 / KW20 / Rd).